Here is a 92-residue protein sequence, read N- to C-terminus: Bombyxin A-4 (92 aa).

Residues 1–19 (MKILLAIALMLSTVMWVST) form the signal peptide. Q20 is subject to Pyrrolidone carboxylic acid. Disulfide bonds link C29–C79, C41–C92, and C78–C83. Positions 50–70 (SGAQFASYGSAWLMPYSEGRG) are cleaved as a propeptide — c peptide like.

It belongs to the insulin family. Heterodimer of a B chain and an A chain linked by two disulfide bonds.

The protein resides in the secreted. Its function is as follows. Brain peptide responsible for activation of prothoracic glands to produce ecdysone in insects. The polypeptide is Bombyxin A-4 (BBXA4) (Bombyx mori (Silk moth)).